Here is a 392-residue protein sequence, read N- to C-terminus: Galactokinase (392 aa).

Alpha-D-galactose contacts are provided by Arg-37, Glu-43, His-44, and Asp-46. Residues Gly-136, Gly-138, Ser-140, and Ser-141 each contribute to the ATP site. Asp-186 is an alpha-D-galactose binding site. The active-site Proton acceptor is the Asp-186. Phosphoserine is present on Ser-230. Residue Tyr-236 coordinates alpha-D-galactose.

The protein belongs to the GHMP kinase family. GalK subfamily. In terms of assembly, homodimer.

The catalysed reaction is alpha-D-galactose + ATP = alpha-D-galactose 1-phosphate + ADP + H(+). The protein operates within carbohydrate metabolism; galactose metabolism. Catalyzes the transfer of a phosphate from ATP to alpha-D-galactose and participates in the first committed step in the catabolism of galactose. The chain is Galactokinase (GALK1) from Bos taurus (Bovine).